A 2533-amino-acid chain; its full sequence is Highly reducing polyketide synthase azaB (2533 aa).

In terms of domain architecture, Ketosynthase family 3 (KS3) spans 7–433 (TAPMAIIGMA…GSNAHAILES (427 aa)). Catalysis depends on for beta-ketoacyl synthase activity residues cysteine 180, histidine 315, and histidine 355. A malonyl-CoA:ACP transacylase (MAT) domain region spans residues 554 to 821 (WVFTGQGAQW…VEFESSFRHM (268 aa)). The interval 946 to 1081 (SDLVGYSQPS…GRISVITTSD (136 aa)) is N-terminal hotdog fold. One can recognise a PKS/mFAS DH domain in the interval 946–1254 (SDLVGYSQPS…CQSLGRALDR (309 aa)). The segment at 947–1251 (DLVGYSQPSI…GLTCQSLGRA (305 aa)) is dehydratase (DH) domain. Histidine 978 (proton acceptor; for dehydratase activity) is an active-site residue. The tract at residues 1097–1254 (YNRRIDPRYM…CQSLGRALDR (158 aa)) is C-terminal hotdog fold. Aspartate 1163 (proton donor; for dehydratase activity) is an active-site residue. Residues 1419-1554 (TRQVSELVRL…GGKLILMETT (136 aa)) form a methyltransferase (CMet) domain region. The enoyl reductase (ER) domain stretch occupies residues 1839 to 2155 (GLIDTLVFHD…TGQHMGKIII (317 aa)). A ketoreductase (KR) domain region spans residues 2178–2349 (ASYVIVGGLG…AVSLDLGIVR (172 aa)). In terms of domain architecture, Carrier spans 2455-2532 (DAAALICQEL…DLSLRVATKR (78 aa)). At serine 2492 the chain carries O-(pantetheine 4'-phosphoryl)serine.

The protein operates within secondary metabolite biosynthesis. Its function is as follows. Highly reducing polyketide synthase; part of the gene cluster that mediates the biosynthesis of azaphilones, a class of fungal metabolites characterized by a highly oxygenated pyrano-quinone bicyclic core and exhibiting a broad range of bioactivities. In the first step, the non-reducing polyketide synthase azaA forms the hexaketide precursor from successive condensations of five malonyl-CoA units, presumably with a simple acetyl-CoA starter unit. The reactive polyketide chain then undergoes a PT-mediated C2-C7 cyclization to afford the aromatic ring and is eventually released as an aldehyde through the R-domain. The putative ketoreductase azaE is proposed to catalyze the reduction of the terminal ketone resulting in the early culture product FK17-P2a. The monooxygenase azaH was demonstrated to be the only enzyme required to convert FK17-P2a to azanigerone E. AzaH first hydroxylates the benzaldehyde intermediate FK17-P2a at C4, which triggers the formation of the pyran-ring to afford azanigerone E. In parallel, the 2,4-dimethylhexanoyl chain is synthesized by the HR-PKS azaB and is proposed to be transferred to the C4-hydroxyl of azanigerone E by the acyltransferase azaD directly from the ACP domain of azaB. Alternatively, the 2,4-dimethyl-hexanoyl chain may be offloaded from the HR-PKS as a carboxylic acid and converted to an acyl-CoA by azaF. The resulting acyl-CoA molecule could then be taken up as a substrate by AzaD to form azanigerone B. To yield the carboxylic acid substituent in azanigerone A, the hydroxypropyl side chain of azanigerone B would need to undergo a C-C oxidative cleavage catalyzed by cytochrome P450 AzaI. AzaI is proposed to act on a vicinal diol that leads to a C-C bond scission either through an alkoxyradical intermediate or a peroxy complex. In the biosynthesis of azanigerone A, azanigerone B first undergoes hydroxylation at C10, possibly catalyzed by one of the two FAD-dependent monooxygenases encoded in the cluster, azaG or azaL, resulting in the vicinal diol azanigerone C. Oxidative cleavage of azanigerone C by azaI would yield the corresponding aldehyde derivative of azanigerone A. Finally, the dehydrogenase azaJ is proposed to convert the aldehyde functional group into the carboxylic acid, completing the conversion from azanigerone B to azanigerone A. Alternatively, the oxidation of aldehyde to carboxylic acid may be catalyzed by the same P450 enzyme azaI via consecutive oxidation or by endogenous alcohol dehydrogenase. This Aspergillus niger (strain ATCC 1015 / CBS 113.46 / FGSC A1144 / LSHB Ac4 / NCTC 3858a / NRRL 328 / USDA 3528.7) protein is Highly reducing polyketide synthase azaB.